Here is a 92-residue protein sequence, read N- to C-terminus: Small ribosomal subunit protein uS19 (92 aa).

Belongs to the universal ribosomal protein uS19 family.

Functionally, protein S19 forms a complex with S13 that binds strongly to the 16S ribosomal RNA. The sequence is that of Small ribosomal subunit protein uS19 from Cereibacter sphaeroides (strain ATCC 17029 / ATH 2.4.9) (Rhodobacter sphaeroides).